A 756-amino-acid chain; its full sequence is Cholesterol uptake protein 1 (756 aa).

The signal sequence occupies residues 1–18; it reads MRTSQAIFILIFLDSVRN. Residues 19 to 268 lie on the Extracellular side of the membrane; the sequence is QSPQVIPAKW…TIESSMKIFD (250 aa). Asn39 and Asn63 each carry an N-linked (GlcNAc...) asparagine glycan. Positions 124-129 match the Cholesterol-binding sequence motif motif; the sequence is VHYNFR. 3 N-linked (GlcNAc...) asparagine glycosylation sites follow: Asn140, Asn174, and Asn257. A helical membrane pass occupies residues 269–289; the sequence is YTIPIVFWACILLLVTIVVFV. At 290 to 373 the chain is on the cytoplasmic side; it reads YHYFDGIWER…YEERELKYDV (84 aa). Residues 374-394 traverse the membrane as a helical segment; the sequence is YKIALAIIGIFYNITVLQLII. Residues 395-421 lie on the Extracellular side of the membrane; that stretch reads SKAGSLRQSGDLDECTFNFQCARPLWY. A helical membrane pass occupies residues 422 to 442; that stretch reads FVAFNNVVSNGGYVYFGTLII. Residues 443 to 473 lie on the Cytoplasmic side of the membrane; that stretch reads VMNYCRERSFRRLFAVQPTLAERYGLPQHSG. The chain crosses the membrane as a helical span at residues 474–494; that stretch reads LMTAIGLAVIMEGISSATYHV. At 495–498 the chain is on the extracellular side; sequence CPNN. The helical transmembrane segment at 499–517 threads the bilayer; it reads INYQFDTALMYVIGMLGKL. Residues 518-530 are Cytoplasmic-facing; the sequence is KIWSLRHPDMVVS. A helical membrane pass occupies residues 531–551; it reads AYHAFGFLGVFLMAAIAGVYV. Residues 552–554 lie on the Extracellular side of the membrane; sequence HNM. A helical transmembrane segment spans residues 555–575; sequence IFWALFSIIYIASMLLVSLEF. A Cholesterol-binding sequence motif motif is present at residues 570–578; the sequence is LVSLEFYFK. Topologically, residues 576–612 are cytoplasmic; the sequence is YFKGIWTLNLRELRNSIRLSWVSSRHLSCVVPAYKAR. Residues 613-633 form a helical membrane-spanning segment; it reads FFVILLLNIANTAVVVYGLEA. Over 634–637 the chain is Extracellular; it reads HPKD. A helical membrane pass occupies residues 638–658; it reads FLSFLLIPFIGNLFIYIIYYI. At 659–671 the chain is on the cytoplasmic side; sequence LMKMIYREKIPKR. The helical transmembrane segment at 672-692 threads the bilayer; that stretch reads AIALLFAAVISWTCAGILFNQ. The Extracellular portion of the chain corresponds to 693–728; it reads RVSDWSKMPAISRELNKPCIFLNFYDNHDLWHLSSA. The chain crosses the membrane as a helical span at residues 729 to 749; that stretch reads FAIFFSFTAINVIDDDLMFVM. Residues 750 to 756 lie on the Cytoplasmic side of the membrane; sequence RNTIRVF.

It belongs to the SID1 family. In terms of tissue distribution, highly expressed along the intestine with expression also detected in the pharynx, especially at the terminal bulb, and in the excretory gland cells.

It is found in the cell membrane. The catalysed reaction is cholesterol(in) = cholesterol(out). In terms of biological role, cholesterol-binding protein which is involved in dietary cholesterol uptake from the environment. Does not play a role in double-stranded RNA transport in contrast to other SID1 family members. The sequence is that of Cholesterol uptake protein 1 from Caenorhabditis elegans.